A 511-amino-acid polypeptide reads, in one-letter code: Ulvan-active sulfatase (511 aa).

The first 34 residues, 1–34, serve as a signal peptide directing secretion; it reads MNFKQNIVYKKMAISMKITAIRPIALVISFTLLS. The N-palmitoyl cysteine moiety is linked to residue C35. Residue C35 is the site of S-diacylglycerol cysteine attachment. Ca(2+)-binding residues include D59 and C99. C99 acts as the Nucleophile in catalysis. C99 is modified (3-oxoalanine (Cys)). H149 is an active-site residue. Residue D305 participates in Ca(2+) binding.

It belongs to the sulfatase family. Requires Ca(2+) as cofactor. Post-translationally, the conversion to 3-oxoalanine (also known as C-formylglycine, FGly), of a serine or cysteine residue in prokaryotes and of a cysteine residue in eukaryotes, is critical for catalytic activity. This post-translational modification is severely defective in multiple sulfatase deficiency (MSD).

Its subcellular location is the cell membrane. In terms of biological role, sulfatase involved in ulvan degradation. Ulvan is the main polysaccharide component of the Ulvales (green seaweed) cell wall. It is composed of disaccharide building blocks comprising 3-sulfated rhamnose (Rha3S) linked to D-glucuronic acid (GlcA), L-iduronic acid (IduA), or D-xylose (Xyl). The chain is Ulvan-active sulfatase from Formosa agariphila (strain DSM 15362 / KCTC 12365 / LMG 23005 / KMM 3901 / M-2Alg 35-1).